The sequence spans 281 residues: Bidirectional sugar transporter SWEET14 (281 aa).

Residues 1-6 are Extracellular-facing; it reads MVLTHN. A helical membrane pass occupies residues 7–27; it reads VLAVTFGVLGNIISFIVFLAP. The region spanning 11–97 is the MtN3/slv 1 domain; sequence TFGVLGNIIS…ILFITYANKK (87 aa). Residues 28-42 are Cytoplasmic-facing; the sequence is VPTFVRICKKKSIEG. Residues 43–63 form a helical membrane-spanning segment; the sequence is FESLPYVSALFSAMLWIYYAL. Residues 64-70 are Extracellular-facing; it reads QKDGAGF. Residues 71 to 91 traverse the membrane as a helical segment; it reads LLITINAVGCFIETIYIILFI. Over 92 to 104 the chain is Cytoplasmic; that stretch reads TYANKKARISTLK. The helical transmembrane segment at 105 to 125 threads the bilayer; sequence VLGLLNFLGFAAIILVCELLT. The Extracellular segment spans residues 126 to 132; that stretch reads KGSNREK. Residues 133-153 form a helical membrane-spanning segment; it reads VLGGICVGFSVCVFAAPLSIM. In terms of domain architecture, MtN3/slv 2 spans 133 to 216; that stretch reads VLGGICVGFS…MILYVIFKYY (84 aa). Topologically, residues 154–166 are cytoplasmic; that stretch reads RVVIRTKSVEFMP. A helical membrane pass occupies residues 167 to 187; it reads FSLSLFLTISAITWLFYGLAI. At 188-192 the chain is on the extracellular side; it reads KDFYV. The chain crosses the membrane as a helical span at residues 193 to 213; it reads ALPNILGAFLGAVQMILYVIF. Topologically, residues 214–281 are cytoplasmic; the sequence is KYYKTPLVVD…EDQMDKKMPN (68 aa). Over residues 244–259 the composition is skewed to polar residues; sequence TPASGDLTVQPQTNPD. Residues 244-281 form a disordered region; the sequence is TPASGDLTVQPQTNPDVSHPIKTHGGDLEDQMDKKMPN. The span at 267 to 281 shows a compositional bias: basic and acidic residues; it reads HGGDLEDQMDKKMPN.

The protein belongs to the SWEET sugar transporter family. In terms of assembly, forms homooligomers and/or heterooligomers.

It localises to the cell membrane. In terms of biological role, mediates both low-affinity uptake and efflux of sugar across the plasma membrane. In Arabidopsis thaliana (Mouse-ear cress), this protein is Bidirectional sugar transporter SWEET14.